A 358-amino-acid polypeptide reads, in one-letter code: Malate dehydrogenase 2, glyoxysomal (358 aa).

Residues 1–38 (MEFRGDANKRIAMISAHLQPSFTPQMEAKNSVMGRENC) constitute a glyoxysome transit peptide. Residues 53–59 (GAAGGIG) and D79 contribute to the NAD(+) site. Residues R126 and R132 each coordinate substrate. NAD(+) contacts are provided by residues N139 and 162-164 (ISN). N164 and R198 together coordinate substrate. The Proton acceptor role is filled by H222. Residue M273 participates in NAD(+) binding.

This sequence belongs to the LDH/MDH superfamily. MDH type 1 family. In terms of assembly, homodimer.

It is found in the glyoxysome. It catalyses the reaction (S)-malate + NAD(+) = oxaloacetate + NADH + H(+). In Brassica napus (Rape), this protein is Malate dehydrogenase 2, glyoxysomal (MDH2).